The primary structure comprises 326 residues: 5-dehydro-2-deoxygluconokinase (326 aa).

The protein belongs to the carbohydrate kinase PfkB family.

It catalyses the reaction 5-dehydro-2-deoxy-D-gluconate + ATP = 6-phospho-5-dehydro-2-deoxy-D-gluconate + ADP + H(+). It participates in polyol metabolism; myo-inositol degradation into acetyl-CoA; acetyl-CoA from myo-inositol: step 5/7. Catalyzes the phosphorylation of 5-dehydro-2-deoxy-D-gluconate (2-deoxy-5-keto-D-gluconate or DKG) to 6-phospho-5-dehydro-2-deoxy-D-gluconate (DKGP). This is 5-dehydro-2-deoxygluconokinase from Lacticaseibacillus casei (Lactobacillus casei).